The following is a 220-amino-acid chain: Pro-Pro endopeptidase (220 aa).

The N-terminal stretch at 1 to 26 is a signal peptide; it reads MRPSKKLLIAIISIFLISSVPVSAHA. In terms of domain architecture, ATLF-like spans 35–220; it reads KDTLSQIVVF…TYSFLQNLAK (186 aa). Interacts with substrate peptide regions lie at residues 101–103 and 117–119; these read KGW and GGS. His-142 provides a ligand contact to Zn(2+). The active-site Proton acceptor is the Glu-143. Zn(2+)-binding residues include His-146, Tyr-178, and Glu-185.

The protein belongs to the peptidase M34 family. Pro-Pro endopeptidase subfamily. Monomer. Zn(2+) serves as cofactor.

It is found in the secreted. The catalysed reaction is The enzyme catalyzes the hydrolytic cleavage of peptide bonds between two proline residues.. Its activity is regulated as follows. Is inhibited by the chelating agent o-phenanthroline in vitro. Zinc-dependent endoprotease with a unique preference for proline residues surrounding the scissile bond. Exhibits a high preference for an asparagine at the P2 position and hydrophobic residues (Val, Ile, Leu) at the P3 position. Efficiently cleaves the LPXTG cell surface proteins CD630_28310 and CD630_32460 at multiple cleavage sites in vivo. Has a role in the regulation of C.difficile adhesion versus motility by cleaving surface adhesion proteins such as the collagen binding protein CD630_28310, and is important for efficient infection. Is also able to cleave fibronectin and fibrinogen in vitro; cleaves at the N-terminus of the beta-chain of fibrinogen. Destabilizes the fibronectin network produced by human fibroblasts. Therefore, may be important in key steps of clostridial pathogenesis by degrading extracellular matrix components associated with the gut epithelial cells. To a lesser extent, IgA1, IgA2, and human HSP 90-beta, but not HSP 90-alpha, are also substrates for the enzyme. Is not active on different collagen types, casein and gelatin. This is Pro-Pro endopeptidase from Clostridioides difficile (strain 630) (Peptoclostridium difficile).